Consider the following 153-residue polypeptide: Nucleoside diphosphate kinase (153 aa).

Ala-2 is subject to N-acetylalanine. Residues Lys-13, Phe-61, Arg-89, Thr-95, Arg-106, and Asn-116 each coordinate ATP. His-119 (pros-phosphohistidine intermediate) is an active-site residue. Residue Ser-126 is modified to Phosphoserine.

The protein belongs to the NDK family. In terms of assembly, homohexamer. It depends on Mg(2+) as a cofactor.

It localises to the cytoplasm. The protein resides in the cytoskeleton. It carries out the reaction a 2'-deoxyribonucleoside 5'-diphosphate + ATP = a 2'-deoxyribonucleoside 5'-triphosphate + ADP. The enzyme catalyses a ribonucleoside 5'-diphosphate + ATP = a ribonucleoside 5'-triphosphate + ADP. Functionally, major role in the synthesis of nucleoside triphosphates other than ATP. The ATP gamma phosphate is transferred to the NDP beta phosphate via a ping-pong mechanism, using a phosphorylated active-site intermediate. The polypeptide is Nucleoside diphosphate kinase (awd) (Drosophila melanogaster (Fruit fly)).